The sequence spans 772 residues: Gelsolin (772 aa).

A signal peptide spans Leu1–Ala17. The propeptide occupies Ala18 to Arg33. Positions Thr19–Arg38 are disordered. The tract at residues Thr41–Phe166 is actin-severing. The Gelsolin-like 1 repeat unit spans residues Phe66–Leu148. Position 76 is a phosphotyrosine (Tyr76). 6 residues coordinate Ca(2+): Gly82, Asp83, Glu114, Asp126, Gly131, and Ala133. The actin-actin interfilament contact point stretch occupies residues Asp113 to Gly116. A 1,2-diacyl-sn-glycero-3-phospho-(1D-myo-inositol-4,5-bisphosphate) is bound at residue Lys152–Lys159. Position 162 (Val162) interacts with Ca(2+). Residue Arg178–Arg186 participates in a 1,2-diacyl-sn-glycero-3-phospho-(1D-myo-inositol-4,5-bisphosphate) binding. Residues Val188–Met260 form a Gelsolin-like 2 repeat. 2 residues coordinate Ca(2+): Gly203 and Asp204. The cysteines at positions 205 and 218 are disulfide-linked. Positions 226, 276, 319, 320, and 344 each coordinate Ca(2+). The stretch at Asp307–Phe379 is one Gelsolin-like 3 repeat. Phosphotyrosine is present on residues Tyr399 and Tyr455. The tract at residues Ala424–Ala772 is actin-binding, Ca-sensitive. A Gelsolin-like 4 repeat occupies Ser445 to Met526. Residues Gly461, Asp462, Glu492, Asp504, Gly509, Pro511, and Thr541 each contribute to the Ca(2+) site. One copy of the Gelsolin-like 5 repeat lies at Arg567–Trp632. Position 574 is an N6-acetyllysine (Lys574). Ca(2+)-binding residues include Asn581 and Asp582. Residue Tyr593 is modified to Phosphotyrosine. A Ca(2+)-binding site is contributed by Glu604. The residue at position 641 (Tyr641) is a Phosphotyrosine. Residues Val671–Phe746 form a Gelsolin-like 6 repeat. Residues Asp686, Asp687, and Glu709 each contribute to the Ca(2+) site. Thr732 is subject to Phosphothreonine.

This sequence belongs to the villin/gelsolin family. As to quaternary structure, binds to actin and to fibronectin. Identified in a complex composed of ACTA1, COBL, GSN and TMSB4X. Interacts with the inactive form of EIF2AK2/PKR. Interacts with FLII. In terms of processing, phosphorylated on tyrosine residues in vitro.

The protein localises to the cytoplasm. The protein resides in the cytoskeleton. It is found in the secreted. Functionally, calcium-regulated, actin-modulating protein that binds to the plus (or barbed) ends of actin monomers or filaments, preventing monomer exchange (end-blocking or capping). It can promote the assembly of monomers into filaments (nucleation) as well as sever filaments already formed. Plays a role in ciliogenesis. This is Gelsolin (GSN) from Sus scrofa (Pig).